We begin with the raw amino-acid sequence, 494 residues long: Glycerol kinase (494 aa).

T13 contacts ADP. The ATP site is built by T13, T14, and S15. T13 contacts sn-glycerol 3-phosphate. ADP is bound at residue R17. The sn-glycerol 3-phosphate site is built by R83, E84, Y135, and D244. 5 residues coordinate glycerol: R83, E84, Y135, D244, and Q245. ADP contacts are provided by T266 and G309. Residues T266, G309, Q313, and G410 each coordinate ATP. Residues G410 and N414 each contribute to the ADP site.

It belongs to the FGGY kinase family.

It carries out the reaction glycerol + ATP = sn-glycerol 3-phosphate + ADP + H(+). It participates in polyol metabolism; glycerol degradation via glycerol kinase pathway; sn-glycerol 3-phosphate from glycerol: step 1/1. Inhibited by fructose 1,6-bisphosphate (FBP). Its function is as follows. Key enzyme in the regulation of glycerol uptake and metabolism. Catalyzes the phosphorylation of glycerol to yield sn-glycerol 3-phosphate. The chain is Glycerol kinase from Shewanella baltica (strain OS185).